Here is a 125-residue protein sequence, read N- to C-terminus: Testis-specific protein LINC02914 (125 aa).

A compositionally biased stretch (basic and acidic residues) spans 1–12 (MHRKEPGARLEA). The interval 1-45 (MHRKEPGARLEATRGAARPHKQGTKPMITRPSVSQLGEGKCPSSQ) is disordered.

As to expression, expressed in testes and ejaculated spermatozoa (at protein level).

It is found in the cytoplasm. Its subcellular location is the nucleus. It localises to the cell projection. The protein resides in the cilium. The protein localises to the flagellum. May play a role in the flagellum biology. The chain is Testis-specific protein LINC02914 from Homo sapiens (Human).